Reading from the N-terminus, the 193-residue chain is Probable molybdenum cofactor guanylyltransferase (193 aa).

GTP contacts are provided by residues 9 to 11 (TAG), K21, D64, and D93. D93 provides a ligand contact to Mg(2+).

It belongs to the MobA family. Requires Mg(2+) as cofactor.

The protein resides in the cytoplasm. The catalysed reaction is Mo-molybdopterin + GTP + H(+) = Mo-molybdopterin guanine dinucleotide + diphosphate. Its function is as follows. Transfers a GMP moiety from GTP to Mo-molybdopterin (Mo-MPT) cofactor (Moco or molybdenum cofactor) to form Mo-molybdopterin guanine dinucleotide (Mo-MGD) cofactor. The protein is Probable molybdenum cofactor guanylyltransferase of Deinococcus radiodurans (strain ATCC 13939 / DSM 20539 / JCM 16871 / CCUG 27074 / LMG 4051 / NBRC 15346 / NCIMB 9279 / VKM B-1422 / R1).